Consider the following 134-residue polypeptide: DNA-binding protein H-NS homolog (134 aa).

Residues 106–134 form a disordered region; the sequence is HKTWTGQGRTPRPIQNALNKGKSLSDFEI. A DNA-binding region spans residues 112–117; the sequence is QGRTPR.

Belongs to the histone-like protein H-NS family. Homodimer that oligomerizes on DNA into higher-order complexes that form bridges between disparate regions of DNA compacting it.

The protein localises to the cytoplasm. Its subcellular location is the nucleoid. Its function is as follows. A DNA-binding protein implicated in transcriptional repression and chromosome organization and compaction. Binds nucleation sites in AT-rich DNA and bridges them, forming higher-order nucleoprotein complexes and condensing the chromosome. As many horizontally transferred genes are AT-rich, it plays a central role in silencing foreign genes. A subset of genes are repressed by H-NS in association with other proteins. The protein is DNA-binding protein H-NS homolog (hns) of Haemophilus influenzae (strain ATCC 51907 / DSM 11121 / KW20 / Rd).